The following is a 311-amino-acid chain: Probable protein phosphatase 2C 59 (311 aa).

A compositionally biased stretch (low complexity) spans 1–14; sequence MGYLNSVLSSSSQV. The interval 1 to 26 is disordered; that stretch reads MGYLNSVLSSSSQVHSDDGPVSGGGL. The region spanning 33–279 is the PPM-type phosphatase domain; it reads SYGYASSPGK…DNITCVVVRF (247 aa). Aspartate 69, glycine 70, aspartate 231, and aspartate 270 together coordinate Mn(2+).

Belongs to the PP2C family. In terms of assembly, interacts with the Pseudomonas syringae pv. maculicola effector HopW1-1 (via C-terminus). It depends on Mg(2+) as a cofactor. Requires Mn(2+) as cofactor.

The enzyme catalyses O-phospho-L-seryl-[protein] + H2O = L-seryl-[protein] + phosphate. The catalysed reaction is O-phospho-L-threonyl-[protein] + H2O = L-threonyl-[protein] + phosphate. Inhibited by sodium fluoride (NaF). Its function is as follows. Protein phosphatase that modulates defense response to pathogenic bacteria, conferring resistance and promoting salicylic acid (SA) accumulation. This chain is Probable protein phosphatase 2C 59 (WIN2), found in Arabidopsis thaliana (Mouse-ear cress).